A 318-amino-acid chain; its full sequence is Carnitine monooxygenase reductase subunit (318 aa).

An FAD-binding FR-type domain is found at 5-107; the sequence is YEMFPAVVTR…SEPKNLFPLA (103 aa). The 86-residue stretch at 233 to 318 folds into the 2Fe-2S ferredoxin-type domain; it reads FTVVLAKSNQ…AKGKKLVLDL (86 aa). Residues Cys-267, Cys-272, Cys-275, and Cys-305 each contribute to the [2Fe-2S] cluster site.

The protein belongs to the PDR/VanB family. CntB subfamily. Composed of an oxygenase subunit (cntA) and a reductase subunit (cntB). Requires FMN as cofactor. [2Fe-2S] cluster is required as a cofactor.

The catalysed reaction is (R)-carnitine + NADH + O2 + H(+) = (3R)-3-hydroxy-4-oxobutanoate + trimethylamine + NAD(+) + H2O. It catalyses the reaction (R)-carnitine + NADPH + O2 + H(+) = (3R)-3-hydroxy-4-oxobutanoate + trimethylamine + NADP(+) + H2O. It functions in the pathway amine and polyamine metabolism; carnitine metabolism. Converts carnitine to trimethylamine and malic semialdehyde. The polypeptide is Carnitine monooxygenase reductase subunit (Acinetobacter baumannii (strain ATCC 19606 / DSM 30007 / JCM 6841 / CCUG 19606 / CIP 70.34 / NBRC 109757 / NCIMB 12457 / NCTC 12156 / 81)).